The primary structure comprises 77 residues: Tautomerase PptA (77 aa).

Residue P2 is the Proton acceptor; via imino nitrogen of the active site.

This sequence belongs to the 4-oxalocrotonate tautomerase family. PptA subfamily. Homodimer.

Its subcellular location is the cytoplasm. This is Tautomerase PptA from Escherichia coli (strain K12 / MC4100 / BW2952).